The following is a 122-amino-acid chain: Serum amyloid A-2 protein (122 aa).

The first 18 residues, 1–18 (MKLLSGLLLCSLVLGVSG), serve as a signal peptide directing secretion. Q19 is subject to Pyrrolidone carboxylic acid. The interval 90–122 (GAEDSMADQAANEWGRSGKDPNHFRPKGLPDKY) is disordered. Basic and acidic residues predominate over residues 105–122 (RSGKDPNHFRPKGLPDKY).

This sequence belongs to the SAA family. In terms of assembly, apolipoprotein of the HDL complex. Expressed by the liver; secreted in plasma.

Its subcellular location is the secreted. Functionally, major acute phase reactant. The chain is Serum amyloid A-2 protein (SAA2) from Oryctolagus cuniculus (Rabbit).